The sequence spans 276 residues: Bis(5'-nucleosyl)-tetraphosphatase, symmetrical (276 aa).

Belongs to the Ap4A hydrolase family.

It catalyses the reaction P(1),P(4)-bis(5'-adenosyl) tetraphosphate + H2O = 2 ADP + 2 H(+). Functionally, hydrolyzes diadenosine 5',5'''-P1,P4-tetraphosphate to yield ADP. The sequence is that of Bis(5'-nucleosyl)-tetraphosphatase, symmetrical from Legionella pneumophila subsp. pneumophila (strain Philadelphia 1 / ATCC 33152 / DSM 7513).